Reading from the N-terminus, the 347-residue chain is NADH-quinone oxidoreductase subunit H (347 aa).

8 consecutive transmembrane segments (helical) span residues 13 to 33, 82 to 102, 115 to 135, 161 to 181, 198 to 218, 248 to 268, 286 to 306, and 325 to 345; these read LIIALKSVVLLVVLLIVVAYL, GVFLLAPFIFAVLAMATWAVI, VGILYIFAISSLEVYGVIMGG, IGFVIVTVLLTVGSLNLTDIV, FLDWNWLCLFPMFVVFFISAL, FLLFFLGEYVAITLMCALMTV, VPGIIWFMLKLCFCFFLFAMV, and VFLPISLFMVVATATFLKVFG.

This sequence belongs to the complex I subunit 1 family. NDH-1 is composed of 14 different subunits. Subunits NuoA, H, J, K, L, M, N constitute the membrane sector of the complex.

It is found in the cell inner membrane. It catalyses the reaction a quinone + NADH + 5 H(+)(in) = a quinol + NAD(+) + 4 H(+)(out). NDH-1 shuttles electrons from NADH, via FMN and iron-sulfur (Fe-S) centers, to quinones in the respiratory chain. The immediate electron acceptor for the enzyme in this species is believed to be ubiquinone. Couples the redox reaction to proton translocation (for every two electrons transferred, four hydrogen ions are translocated across the cytoplasmic membrane), and thus conserves the redox energy in a proton gradient. This subunit may bind ubiquinone. The polypeptide is NADH-quinone oxidoreductase subunit H (Brucella melitensis biotype 1 (strain ATCC 23456 / CCUG 17765 / NCTC 10094 / 16M)).